The chain runs to 499 residues: MIRNSMKSHTELLSWNLLQKEADRVRLNSDSLTCVVPDSNNYESSKQINCIEYDYSRQRVNRTIIDLLIDLANEVKLQEKIDNLINGKKINISENRPALHTALRDLGNKSIMIDGLDIMSAVINTREKIKVISNQIREKKWLGHSGLPITDIVNIGIGGSDLGPRVCINALSNYISKEFNYHFISDVDPASFNDVIAKINPQTTLFIVSSKSFTTKETLLNARKAFALYEDTASIDQHFIAVTAHPERAYQMGIKTVLPIWDWVGGRFSFCSAVNLITAIAIGYEQFVELLAGAHDVDTHVQFTDFKNNIPVLMALIGIWNNNFLNIHNLLILTYSKKLEYFVPYVQQLDMESNGKSIDVNGSMVDYATGPIVWGGLGNQAQHSYFQLLCQGTHRCVGDFITLKTNDEHEINSMCHYKMKVLSEGIQTIENPYGYIPGNMPMNHLILSDCSPYTLGALVALYEHKIFVQSVIWNINPFDQPGIESAKSAHREITLSSES.

Residue E352 is the Proton donor of the active site. Active-site residues include H383 and K487.

Belongs to the GPI family.

The protein localises to the cytoplasm. It catalyses the reaction alpha-D-glucose 6-phosphate = beta-D-fructose 6-phosphate. It functions in the pathway carbohydrate biosynthesis; gluconeogenesis. The protein operates within carbohydrate degradation; glycolysis; D-glyceraldehyde 3-phosphate and glycerone phosphate from D-glucose: step 2/4. Catalyzes the reversible isomerization of glucose-6-phosphate to fructose-6-phosphate. In Legionella pneumophila (strain Paris), this protein is Glucose-6-phosphate isomerase.